A 432-amino-acid chain; its full sequence is 5-hydroxybenzimidazole synthase BzaA (432 aa).

Residues M95, Y124, H163, 185 to 187 (SYG), and 226 to 229 (DGMR) contribute to the substrate site. H269 serves as a coordination point for Zn(2+). Residue F292 participates in substrate binding. Position 333 (H333) interacts with Zn(2+). Residues C409, C412, and C416 each coordinate [4Fe-4S] cluster.

It belongs to the ThiC family. 5-hydroxybenzimidazole synthase subfamily. The cofactor is [4Fe-4S] cluster.

The catalysed reaction is 5-amino-1-(5-phospho-beta-D-ribosyl)imidazole + AH2 + S-adenosyl-L-methionine = 5-hydroxybenzimidazole + 5'-deoxyadenosine + formate + L-methionine + A + NH4(+) + phosphate + 2 H(+). In terms of biological role, together with BzaB, probably catalyzes the conversion of aminoimidazole ribotide (AIR) to 5-hydroxybenzimidazole (5-HBI) in a radical S-adenosyl-L-methionine (SAM)-dependent reaction. Is thus involved in the anaerobic biosynthesis of the benzimidazole lower axial ligand of the cobamide produced by M.thermoacetica. Requires BzaB for catalytic activity, as BzaA alone displays no activity. This Moorella thermoacetica (strain ATCC 39073 / JCM 9320) protein is 5-hydroxybenzimidazole synthase BzaA.